The chain runs to 358 residues: Alanine racemase (358 aa).

The active-site Proton acceptor; specific for D-alanine is the K35. K35 carries the N6-(pyridoxal phosphate)lysine modification. R130 is a binding site for substrate. Residue Y255 is the Proton acceptor; specific for L-alanine of the active site. M303 serves as a coordination point for substrate.

It belongs to the alanine racemase family. Requires pyridoxal 5'-phosphate as cofactor.

The enzyme catalyses L-alanine = D-alanine. The protein operates within amino-acid biosynthesis; D-alanine biosynthesis; D-alanine from L-alanine: step 1/1. Its function is as follows. Catalyzes the interconversion of L-alanine and D-alanine. May also act on other amino acids. In Shewanella baltica (strain OS195), this protein is Alanine racemase (alr).